We begin with the raw amino-acid sequence, 96 residues long: uncharacterized protein (96 aa).

It belongs to the NifU family.

This is an uncharacterized protein from Azotobacter vinelandii.